Here is a 740-residue protein sequence, read N- to C-terminus: Leucine-rich repeat neuronal protein 4 (740 aa).

Positions 1–18 (MRQTLPLLLLTVLRPSWA) are cleaved as a signal peptide. The Extracellular segment spans residues 19 to 679 (DPPQEKVPLF…PCAAFTTKPS (661 aa)). N42 is a glycosylation site (N-linked (GlcNAc...) asparagine). LRR repeat units follow at residues 51–74 (LPAADATALTLANRNLERLPGCLP), 75–97 (RTLRSLDASHNLLRALSTSELGH), 98–123 (LEQLQVLTLRHNRIAALRWGPGGPAG), 125–144 (HTLDLSYNQLAALPPCTGPA), 145–168 (LSSLRALALAGNPLRALQPRAFAC), 174–197 (LLNLSCTALGRGAQGGIAEAAFAG), 203–226 (LVTLEVLDLSGTFLERVESGWIRD), 228–251 (PKLTSLYLRKMPRLTTLEGDIFKM), 253–276 (PNLQQLDCQDSPALASVATHIFQD), and 277–300 (TPHLQVLLFQNCNLSSFPPWTLDS). An N-linked (GlcNAc...) asparagine glycan is attached at N176. N-linked (GlcNAc...) asparagine glycosylation is found at N289, N379, and N442. Residues 389–517 (VAPSAAPATR…QAPNPSLSEG (129 aa)) form a disordered region. Polar residues-rich tracts occupy residues 430 to 454 (APSTTNSVAGHSNSSVFPRAASTTR) and 490 to 514 (WDRSISSPQPGQRTHATPQAPNPSL). Residues 579–679 (IPDPPRLQGV…PCAAFTTKPS (101 aa)) enclose the Fibronectin type-III domain. N622 carries N-linked (GlcNAc...) asparagine glycosylation. A helical membrane pass occupies residues 680-700 (FALLLSGLCAASGLLLASTVV). Residues 701–740 (LSACLCRRGQTLGLQRCDTHLVAYKNPAFDDYPLGLQTVS) are Cytoplasmic-facing.

It localises to the membrane. Functionally, may play an important role in hippocampus-dependent long-lasting memory. This Homo sapiens (Human) protein is Leucine-rich repeat neuronal protein 4 (LRRN4).